Here is a 135-residue protein sequence, read N- to C-terminus: UPF0355 protein SACOL0457 (135 aa).

Belongs to the UPF0355 family.

The sequence is that of UPF0355 protein SACOL0457 from Staphylococcus aureus (strain COL).